A 377-amino-acid polypeptide reads, in one-letter code: Probable protein phosphatase 2C 7 (377 aa).

Disordered stretches follow at residues 1-68 and 80-99; these read MAAH…GKAA and TTVA…EDDE. Over residues 21-39 the composition is skewed to low complexity; it reads PPAAEAEAAAAAAAIARAA. Positions 51–63 are enriched in basic residues; it reads GVRHPLKHRRFRA. Over residues 80 to 89 the composition is skewed to low complexity; that stretch reads TTVAEATATG. The region spanning 115-361 is the PPM-type phosphatase domain; the sequence is SCGYSSFRGR…DNITCIVVKF (247 aa). Residues Asp151, Gly152, Asp313, and Asp352 each contribute to the Mn(2+) site.

The protein belongs to the PP2C family. Mg(2+) is required as a cofactor. It depends on Mn(2+) as a cofactor.

The enzyme catalyses O-phospho-L-seryl-[protein] + H2O = L-seryl-[protein] + phosphate. It catalyses the reaction O-phospho-L-threonyl-[protein] + H2O = L-threonyl-[protein] + phosphate. The protein is Probable protein phosphatase 2C 7 of Oryza sativa subsp. japonica (Rice).